Reading from the N-terminus, the 177-residue chain is Cell division inhibitor SulA (177 aa).

A ftsZ binding region spans residues 112-118 (ALASGNY). A lon protease binding region spans residues 170–177 (KIHSIHYH).

The protein belongs to the SulA family. In terms of assembly, interacts with FtsZ. Post-translationally, is rapidly cleaved and degraded by the Lon protease once DNA damage is repaired.

Functionally, component of the SOS system and an inhibitor of cell division. Accumulation of SulA causes rapid cessation of cell division and the appearance of long, non-septate filaments. In the presence of GTP, binds a polymerization-competent form of FtsZ in a 1:1 ratio, thus inhibiting FtsZ polymerization and therefore preventing it from participating in the assembly of the Z ring. This mechanism prevents the premature segregation of damaged DNA to daughter cells during cell division. The sequence is that of Cell division inhibitor SulA from Photorhabdus laumondii subsp. laumondii (strain DSM 15139 / CIP 105565 / TT01) (Photorhabdus luminescens subsp. laumondii).